A 230-amino-acid chain; its full sequence is UPF0173 metal-dependent hydrolase RHOS4_08540 (230 aa).

It belongs to the UPF0173 family.

The polypeptide is UPF0173 metal-dependent hydrolase RHOS4_08540 (Cereibacter sphaeroides (strain ATCC 17023 / DSM 158 / JCM 6121 / CCUG 31486 / LMG 2827 / NBRC 12203 / NCIMB 8253 / ATH 2.4.1.) (Rhodobacter sphaeroides)).